A 522-amino-acid chain; its full sequence is Cytochrome b mRNA maturase bI3 (522 aa).

The Mitochondrial matrix segment spans residues 1 to 31; it reads MTIRKSNPYLSLVNSYLMDSPQPSSMNYWWN. The segment at 1–163 is cytochrome b; sequence MTIRKSNPYL…MPFMGGDLVP (163 aa). The helical transmembrane segment at 32–52 threads the bilayer; sequence VGSLLGLCLVMQMASGMFLAM. Residues 53-84 are Mitochondrial intermembrane-facing; it reads HYSSSMELAFNSVEHMMRDVNAGWLMRYIHAN. A helical transmembrane segment spans residues 85-105; it reads GASFFFMCLYLHMGKALYYGS. The Mitochondrial matrix segment spans residues 106-110; the sequence is YKSPR. The chain crosses the membrane as a helical span at residues 111–131; that stretch reads VLVWSMGVMMFMLTMATAFMG. The Mitochondrial intermembrane segment spans residues 132–154; that stretch reads YCLVYGQMSHWGATVITNLLSAM. Residues 155-175 form a helical membrane-spanning segment; it reads PFMGGDLVPLSIILSLYLLYI. Positions 164–522 are maturase; the sequence is LSIILSLYLL…PYMSWHQKEQ (359 aa). Residues 176–522 lie on the Mitochondrial matrix side of the membrane; sequence SLKTFMKMIF…PYMSWHQKEQ (347 aa).

This sequence in the N-terminal section; belongs to the cytochrome b family. It in the C-terminal section; belongs to the LAGLIDADG endonuclease family.

It is found in the mitochondrion inner membrane. In terms of biological role, mitochondrial mRNA maturase required for splicing of intron 3 of the cytochrome b (COB) gene, containing its own coding sequence. The sequence is that of Cytochrome b mRNA maturase bI3 (bI3) from Debaryomyces hansenii (strain ATCC 36239 / CBS 767 / BCRC 21394 / JCM 1990 / NBRC 0083 / IGC 2968) (Yeast).